The chain runs to 370 residues: Ornithine carbamoyltransferase, mitochondrial (370 aa).

The transit peptide at Met-1–Thr-38 directs the protein to the mitochondrion. Carbamoyl phosphate-binding positions include Ser-97–Thr-100, Arg-148, His-175, and Gln-178. L-ornithine is bound by residues Asn-216, Asp-282, Ser-286, and Met-287. The Proton acceptor role is filled by Cys-324. Carbamoyl phosphate contacts are provided by residues Cys-324–Leu-325 and Arg-351.

The protein belongs to the aspartate/ornithine carbamoyltransferase superfamily. OTCase family. In terms of assembly, homotrimer.

It is found in the mitochondrion matrix. It carries out the reaction carbamoyl phosphate + L-ornithine = L-citrulline + phosphate + H(+). It participates in amino-acid biosynthesis; L-arginine biosynthesis; L-arginine from L-ornithine and carbamoyl phosphate: step 1/3. This chain is Ornithine carbamoyltransferase, mitochondrial (argB), found in Aspergillus niger.